A 215-amino-acid chain; its full sequence is 3-dehydroquinate dehydratase (215 aa).

Residues 27 to 29 and Arg-54 each bind 3-dehydroquinate; that span reads EVR. The active-site Proton donor/acceptor is His-112. Lys-139 serves as the catalytic Schiff-base intermediate with substrate. 2 residues coordinate 3-dehydroquinate: Arg-176 and Gln-198.

The protein belongs to the type-I 3-dehydroquinase family. In terms of assembly, homodimer.

It catalyses the reaction 3-dehydroquinate = 3-dehydroshikimate + H2O. It functions in the pathway metabolic intermediate biosynthesis; chorismate biosynthesis; chorismate from D-erythrose 4-phosphate and phosphoenolpyruvate: step 3/7. In terms of biological role, involved in the third step of the chorismate pathway, which leads to the biosynthesis of aromatic amino acids. Catalyzes the cis-dehydration of 3-dehydroquinate (DHQ) and introduces the first double bond of the aromatic ring to yield 3-dehydroshikimate. The sequence is that of 3-dehydroquinate dehydratase from Thermococcus onnurineus (strain NA1).